The primary structure comprises 157 residues: DNA gyrase inhibitor (157 aa).

This sequence belongs to the DNA gyrase inhibitor family. In terms of assembly, interacts with DNA gyrase.

Its subcellular location is the cytoplasm. In terms of biological role, inhibits the supercoiling activity of DNA gyrase. Acts by inhibiting DNA gyrase at an early step, prior to (or at the step of) binding of DNA by the gyrase. It protects cells against toxins that target DNA gyrase, by inhibiting activity of these toxins and reducing the formation of lethal double-strand breaks in the cell. In Klebsiella pneumoniae (strain 342), this protein is DNA gyrase inhibitor.